The sequence spans 277 residues: Ribosomally synthesized cyclic peptide asperipin-2a precursor aprA (277 aa).

The first 19 residues, 1-19 (MHLSRYIAVLLSASSFVSA), serve as a signal peptide directing secretion. Propeptides lie at residues 20–69 (LPLQ…LDKR), 76–88 (KRNA…LDKR), 95–107 (KRNA…LDKR), 114–126 (KRNA…LDKR), 133–145 (KRNA…LDKR), 152–164 (KRNA…LDKR), 171–183 (KRNA…LDKR), 190–202 (KRNA…LDKR), 209–221 (KRNA…LDKR), 228–240 (KRNA…LDKR), 247–259 (KRNA…LDKR), and 266–277 (KRNAETPEDLDK).

In terms of processing, aprA is processed by kexin proteases to produce 11 identical copies of the hexapeptide Phe-Tyr-Tyr-Thr-Gly-Tyr, that is further modified aprY and aprR to yield asperipin-2a. The bicyclic structure of asperipin-2a is likely synthesized by the single ustYa family oxidase aprY. The reductase aprR may be required for the final reduction to yield asperipin-2a.

It participates in secondary metabolite biosynthesis. In terms of biological role, ribosomally synthesized cyclic peptide asperipin-2a precursor; part of the gene cluster that mediates the biosynthesis of the asperipin-2a, a bicyclic peptide that possesses two macrocyclic ether rings consisting of 14- and 17-membered paracyclophans. The aprA translated product contains a 11-fold repeated peptide embedding the hexapeptide Phe-Tyr-Tyr-Thr-Gly-Tyr, that is converted into asperipin-2a. After being excised from the precursor peptide by kexin proteases, the core peptides are cyclized and modified post-translationally by enzymes encoded within the corresponding gene cluster. This is Ribosomally synthesized cyclic peptide asperipin-2a precursor aprA from Aspergillus flavus (strain ATCC 200026 / FGSC A1120 / IAM 13836 / NRRL 3357 / JCM 12722 / SRRC 167).